A 240-amino-acid chain; its full sequence is 4-hydroxy-tetrahydrodipicolinate reductase (240 aa).

NAD(+) is bound by residues 79 to 81 (ATT) and 103 to 106 (SANM). H135 serves as the catalytic Proton donor/acceptor. H136 is a (S)-2,3,4,5-tetrahydrodipicolinate binding site. Residue K139 is the Proton donor of the active site. 145–146 (GT) is a binding site for (S)-2,3,4,5-tetrahydrodipicolinate.

It belongs to the DapB family.

It localises to the cytoplasm. It catalyses the reaction (S)-2,3,4,5-tetrahydrodipicolinate + NAD(+) + H2O = (2S,4S)-4-hydroxy-2,3,4,5-tetrahydrodipicolinate + NADH + H(+). The catalysed reaction is (S)-2,3,4,5-tetrahydrodipicolinate + NADP(+) + H2O = (2S,4S)-4-hydroxy-2,3,4,5-tetrahydrodipicolinate + NADPH + H(+). Its pathway is amino-acid biosynthesis; L-lysine biosynthesis via DAP pathway; (S)-tetrahydrodipicolinate from L-aspartate: step 4/4. Catalyzes the conversion of 4-hydroxy-tetrahydrodipicolinate (HTPA) to tetrahydrodipicolinate. This chain is 4-hydroxy-tetrahydrodipicolinate reductase, found in Staphylococcus saprophyticus subsp. saprophyticus (strain ATCC 15305 / DSM 20229 / NCIMB 8711 / NCTC 7292 / S-41).